The following is a 116-amino-acid chain: Pancreatic progenitor cell differentiation and proliferation factor (116 aa).

Residue serine 9 is modified to Phosphoserine. 2 disordered regions span residues 22–47 and 92–116; these read GSTS…PGLP and LAQK…PRPE. Low complexity predominate over residues 23 to 32; the sequence is STSSNSSCGS.

The protein belongs to the PPDPF family.

In terms of biological role, probable regulator of exocrine pancreas development. This Bos taurus (Bovine) protein is Pancreatic progenitor cell differentiation and proliferation factor (PPDPF).